Reading from the N-terminus, the 433-residue chain is Histone deacetylase RPD3 (433 aa).

The interval 19–331 (RRVAYFYDAD…WCFETGLLNN (313 aa)) is histone deacetylase. His151 is a catalytic residue. An ESA1-RPD3 motif motif is present at residues 320 to 340 (RTWCFETGLLNNVVLDKDLPY). The tract at residues 388–433 (SVQLNHTPRDAEDLGDVEEDSAEAKDTKGGSQYARDLHVEHDNEFY) is disordered. Phosphothreonine is present on Thr394. Ser408 carries the phosphoserine modification. A compositionally biased stretch (basic and acidic residues) spans 422-433 (RDLHVEHDNEFY).

The protein belongs to the histone deacetylase family. HD type 1 subfamily. In terms of assembly, component of the RPD3C(L) complex composed of at least ASH1, CTI6, DEP1, PHO23, RPD3, RXT2, RXT3, SAP30, SDS3, SIN3, UME1 and UME6. Component of the RPD3C(S) complex composed of at least EAF3, RCO1, RPD3, SIN3, and UME1. Interacts with cyclophilins CPR1, CPR6 and CPR7, with the kinase HOG1, and with ESS1, CYC8 and HAC1.

It is found in the cytoplasm. Its subcellular location is the nucleus. The enzyme catalyses N(6)-acetyl-L-lysyl-[histone] + H2O = L-lysyl-[histone] + acetate. Functionally, catalytic component of the RPD3 histone deacetylase (HDAC) complexes RPD3C(L) and RPD3C(S) responsible for the deacetylation of lysine residues on the N-terminal part of the core histones (H2A, H2B, H3 and H4). Histone deacetylation plays an important role in transcriptional regulation, cell cycle progression, DNA damage response, osmotic stress response and developmental events. Is involved in rDNA and telomere silencing and in double strand breaks repair. Required for both full transcription repression and activation of many genes including cell type-specific genes (STE6, TY2 and HO), cell differentiation-specific genes (SPO13), genes that respond to external signals (PHO5) and TRK2. The RPD3 complexes regulate also chromosomal replication timing. This Saccharomyces cerevisiae (strain ATCC 204508 / S288c) (Baker's yeast) protein is Histone deacetylase RPD3 (RPD3).